The primary structure comprises 201 residues: 3-isopropylmalate dehydratase small subunit (201 aa).

The protein belongs to the LeuD family. LeuD type 1 subfamily. Heterodimer of LeuC and LeuD.

It carries out the reaction (2R,3S)-3-isopropylmalate = (2S)-2-isopropylmalate. It participates in amino-acid biosynthesis; L-leucine biosynthesis; L-leucine from 3-methyl-2-oxobutanoate: step 2/4. Functionally, catalyzes the isomerization between 2-isopropylmalate and 3-isopropylmalate, via the formation of 2-isopropylmaleate. This is 3-isopropylmalate dehydratase small subunit from Rhizobium meliloti (strain 1021) (Ensifer meliloti).